Consider the following 439-residue polypeptide: Chromosomal replication initiator protein DnaA (439 aa).

A domain I, interacts with DnaA modulators region spans residues 1–75 (MESWSRCLER…GIREVVLAIG (75 aa)). A domain II region spans residues 75-101 (GSRPKTTELTVPVDTTGRLSQTVPFNG). A domain III, AAA+ region region spans residues 102 to 319 (NLDTHYNFDN…GALNTLVARA (218 aa)). ATP is bound by residues G147, G149, K150, and T151. Positions 320-439 (NFTGRAVTIE…WDKLMRKFSE (120 aa)) are domain IV, binds dsDNA.

This sequence belongs to the DnaA family. In terms of assembly, oligomerizes as a right-handed, spiral filament on DNA at oriC.

It localises to the cytoplasm. Plays an essential role in the initiation and regulation of chromosomal replication. ATP-DnaA binds to the origin of replication (oriC) to initiate formation of the DNA replication initiation complex once per cell cycle. Binds the DnaA box (a 9 base pair repeat at the origin) and separates the double-stranded (ds)DNA. Forms a right-handed helical filament on oriC DNA; dsDNA binds to the exterior of the filament while single-stranded (ss)DNA is stabiized in the filament's interior. The ATP-DnaA-oriC complex binds and stabilizes one strand of the AT-rich DNA unwinding element (DUE), permitting loading of DNA polymerase. After initiation quickly degrades to an ADP-DnaA complex that is not apt for DNA replication. Binds acidic phospholipids. The polypeptide is Chromosomal replication initiator protein DnaA (Xylella fastidiosa (strain Temecula1 / ATCC 700964)).